The following is a 172-amino-acid chain: Translation initiation factor IF-3 (172 aa).

It belongs to the IF-3 family. In terms of assembly, monomer.

Its subcellular location is the cytoplasm. Functionally, IF-3 binds to the 30S ribosomal subunit and shifts the equilibrium between 70S ribosomes and their 50S and 30S subunits in favor of the free subunits, thus enhancing the availability of 30S subunits on which protein synthesis initiation begins. The sequence is that of Translation initiation factor IF-3 from Campylobacter jejuni subsp. doylei (strain ATCC BAA-1458 / RM4099 / 269.97).